We begin with the raw amino-acid sequence, 213 residues long: Kynurenine formamidase (213 aa).

A substrate-binding site is contributed by tryptophan 18. Residues histidine 48, histidine 52, and aspartate 54 each coordinate Zn(2+). The Proton donor/acceptor role is filled by histidine 58. 2 residues coordinate Zn(2+): histidine 160 and glutamate 172.

It belongs to the Cyclase 1 superfamily. KynB family. In terms of assembly, homodimer. It depends on Zn(2+) as a cofactor.

It catalyses the reaction N-formyl-L-kynurenine + H2O = L-kynurenine + formate + H(+). It participates in amino-acid degradation; L-tryptophan degradation via kynurenine pathway; L-kynurenine from L-tryptophan: step 2/2. Its function is as follows. Catalyzes the hydrolysis of N-formyl-L-kynurenine to L-kynurenine, the second step in the kynurenine pathway of tryptophan degradation. In Burkholderia pseudomallei (strain 1106a), this protein is Kynurenine formamidase.